The sequence spans 338 residues: MAGSHPYFNLPDSTHPSPPSAPPSLRWCQRCQPSDATNGLLVALLGGGLPAGFVGPLSRMAYQASNLPSLELLICRCLFHLPIALPLKLRGDPLLGPPDIRGRACFCALLNVLSIGCAYSAVQVVPAGNAATVRKGSSTVCSAILTLCLESQGLSGYDWCGLLGSILGLIIIVGPGLWTLQEGTMGVYTALGYVQAFLGGLALSLGLLVYRSLHFPSCLPTVAFLFGLVGLLGFVPGLFVLQTPVLPSDLLSWSCVGAVGILALVSFTCVGYAVTKAHPALVCAVLHSEVVVALILQYYVLHETVAPFDITGAGIVLGSIAIITARNLSCERTGKVEE.

The tract at residues 1–21 (MAGSHPYFNLPDSTHPSPPSA) is disordered. 9 helical membrane passes run 37–57 (TNGL…VGPL), 67–87 (LPSL…ALPL), 105–125 (CFCA…VQVV), 160–180 (CGLL…LWTL), 190–210 (ALGY…LLVY), 221–241 (TVAF…LFVL), 250–270 (LLSW…FTCV), 281–301 (LVCA…YYVL), and 305–325 (VAPF…IITA). In terms of domain architecture, EamA 1 spans 49–174 (LPAGFVGPLS…SILGLIIIVG (126 aa)). The 54-residue stretch at 272-325 (YAVTKAHPALVCAVLHSEVVVALILQYYVLHETVAPFDITGAGIVLGSIAIITA) folds into the EamA 2 domain.

It belongs to the SLC35G solute transporter family.

Its subcellular location is the membrane. This Pan paniscus (Pygmy chimpanzee) protein is Solute carrier family 35 member G5 (SLC35G5).